The sequence spans 181 residues: uncharacterized protein (181 aa).

The segment at 162 to 181 (QARGPAGTRTPQRRCSSHEA) is disordered.

This is an uncharacterized protein from Homo sapiens (Human).